The sequence spans 592 residues: Ferric-chelate reductase 1 (592 aa).

Residues 2-22 (AVSGFTLGTCILLLHISYVAN) form a helical membrane-spanning segment. A Reelin domain is found at 13 to 179 (LLLHISYVAN…FTTPKATVVP (167 aa)). N-linked (GlcNAc...) asparagine glycans are attached at residues Asn138, Asn308, and Asn321. Positions 216-331 (EASCVFLSFT…TSYYIFLADG (116 aa)) constitute a DOMON domain. Positions 335 to 534 (DGRIYKHSQQ…VGTEVVLEVH (200 aa)) constitute a Cytochrome b561 domain. A helical transmembrane segment spans residues 372 to 392 (VHGALMFVAWMTTVSIGVLVA). Heme b contacts are provided by His373 and His414. A run of 2 helical transmembrane segments spans residues 415–435 (RMLMFTTTVLTCIAFVMPFIY) and 446–466 (HPYLGCIVMTLAVLQPLLAVF). Heme b is bound by residues His446 and His482. Transmembrane regions (helical) follow at residues 491 to 511 (IIAVAAMFLGMDLPGLNLPDS), 515 to 535 (YAMTGFVAWHVGTEVVLEVHA), and 569 to 589 (AVLAIYVCGNVTFLIIFLSAI).

Belongs to the FRRS1 family. Requires heme b as cofactor.

Its subcellular location is the membrane. In terms of biological role, ferric-chelate reductases reduce Fe(3+) to Fe(2+) before its transport from the endosome to the cytoplasm. The chain is Ferric-chelate reductase 1 (FRRS1) from Homo sapiens (Human).